The primary structure comprises 394 residues: 8-amino-7-oxononanoate synthase (394 aa).

Arginine 18 serves as a coordination point for substrate. 105–106 (GY) serves as a coordination point for pyridoxal 5'-phosphate. Histidine 130 is a substrate binding site. Pyridoxal 5'-phosphate is bound by residues serine 175, histidine 203, and threonine 232. Lysine 235 bears the N6-(pyridoxal phosphate)lysine mark. A substrate-binding site is contributed by threonine 349.

This sequence belongs to the class-II pyridoxal-phosphate-dependent aminotransferase family. BioF subfamily. Homodimer. Pyridoxal 5'-phosphate is required as a cofactor.

It catalyses the reaction 6-carboxyhexanoyl-[ACP] + L-alanine + H(+) = (8S)-8-amino-7-oxononanoate + holo-[ACP] + CO2. It functions in the pathway cofactor biosynthesis; biotin biosynthesis. In terms of biological role, catalyzes the decarboxylative condensation of pimeloyl-[acyl-carrier protein] and L-alanine to produce 8-amino-7-oxononanoate (AON), [acyl-carrier protein], and carbon dioxide. The polypeptide is 8-amino-7-oxononanoate synthase (Marinobacter nauticus (strain ATCC 700491 / DSM 11845 / VT8) (Marinobacter aquaeolei)).